The following is an 87-amino-acid chain: Phosphoribosyl-ATP pyrophosphatase (87 aa).

It belongs to the PRA-PH family.

It localises to the cytoplasm. It catalyses the reaction 1-(5-phospho-beta-D-ribosyl)-ATP + H2O = 1-(5-phospho-beta-D-ribosyl)-5'-AMP + diphosphate + H(+). It participates in amino-acid biosynthesis; L-histidine biosynthesis; L-histidine from 5-phospho-alpha-D-ribose 1-diphosphate: step 2/9. This Saccharopolyspora erythraea (strain ATCC 11635 / DSM 40517 / JCM 4748 / NBRC 13426 / NCIMB 8594 / NRRL 2338) protein is Phosphoribosyl-ATP pyrophosphatase.